Here is a 452-residue protein sequence, read N- to C-terminus: Lamina-associated polypeptide 2, isoforms beta/delta/epsilon/gamma (452 aa).

Positions 1-409 (MPEFLEDPSV…KSEKTKKRRS (409 aa)) are nucleoplasmic. The LEM-like domain occupies 5–48 (LEDPSVLTKDKLKSELVANNVTLPAGEQRKDVYVQLYLQHLTAR). Disordered stretches follow at residues 48 to 111 (RNRP…DLDV) and 149 to 263 (REQG…RVET). The linker stretch occupies residues 49–108 (NRPPLAAGANSKGPPDFSSDEEREPTPVLGSGASVGRGRGAVGRKATKKTDKPRLEDKDD). A phosphoserine mark is found at S59, S66, and S67. The residue at position 74 (T74) is a Phosphothreonine. Phosphoserine is present on residues S79 and S82. Residues R85 and R87 each carry the omega-N-methylarginine modification. Positions 96 to 105 (KKTDKPRLED) are enriched in basic and acidic residues. An LEM domain is found at 109 to 153 (LDVTELSNEELLDQLVRYGVNPGPIVGTTRKLYEKKLLKLREQGT). The segment at 137-242 (TRKLYEKKLL…TSGSSTGGPL (106 aa)) is NAKAP95-binding N. T153 is modified (phosphothreonine). Residues 154–177 (ESRSSTPLPTVSSSAENTRQNGSN) are compositionally biased toward polar residues. Phosphoserine occurs at positions 155 and 158. Phosphothreonine is present on residues T159 and T163. Phosphoserine is present on residues S165, S167, and S176. A compositionally biased stretch (basic and acidic residues) spans 178 to 202 (DSDRYSDNDEDSKIELKLEKREPLK). S179 carries the phosphoserine; by PKC modification. 2 positions are modified to phosphoserine: S183 and S189. At K206 the chain carries N6-acetyllysine. T210 carries the phosphothreonine modification. S221 and S223 each carry phosphoserine. Over residues 226 to 240 (GVTETEWTSGSSTGG) the composition is skewed to low complexity. S249, S253, S264, S291, S305, and S306 each carry phosphoserine. The segment at 298–370 (TGNFKHASSI…SCRRPIKGAA (73 aa)) is binds lamins B. Residues 299-373 (GNFKHASSIL…RPIKGAAGRP (75 aa)) are NAKAP95-binding C. At T311 the chain carries Phosphothreonine. Phosphoserine is present on S314. A Citrulline modification is found at R319. Phosphoserine is present on residues S361, S377, and S384. At K388 the chain carries N6-acetyllysine. Residue K400 forms a Glycyl lysine isopeptide (Lys-Gly) (interchain with G-Cter in SUMO2) linkage. S401 is subject to Phosphoserine. A helical; Signal-anchor for type II membrane protein membrane pass occupies residues 410-430 (VPMWIKMLLFALVAVFLFLVY). The Lumenal portion of the chain corresponds to 431–452 (QAMETNQGNPFTNFLQDTKISN).

The protein belongs to the LEM family. As to quaternary structure, interacts with LMNB1, LMNB2, BANF1, AKAP8L, GMCL and chromosomes. Post-translationally, mitosis-specific phosphorylation specifically abolishes its binding to lamin B and chromosomes. In terms of processing, citrullinated by PADI4.

It is found in the nucleus inner membrane. The protein resides in the chromosome. In terms of biological role, may help direct the assembly of the nuclear lamina and thereby help maintain the structural organization of the nuclear envelope. Possible receptor for attachment of lamin filaments to the inner nuclear membrane. May be involved in the control of initiation of DNA replication through its interaction with NAKAP95. This is Lamina-associated polypeptide 2, isoforms beta/delta/epsilon/gamma (Tmpo) from Mus musculus (Mouse).